Consider the following 967-residue polypeptide: RNA polymerase-associated protein RapA (967 aa).

The Helicase ATP-binding domain occupies 163–332 (EVGRRHAPRV…FARLRLLDPD (170 aa)). 176–183 (DEVGLGKT) is an ATP binding site. A DEAH box motif is present at residues 278-281 (DEAH). In terms of domain architecture, Helicase C-terminal spans 491-639 (RVDWLIDFLK…LCAFELTCPG (149 aa)).

This sequence belongs to the SNF2/RAD54 helicase family. RapA subfamily. As to quaternary structure, interacts with the RNAP. Has a higher affinity for the core RNAP than for the holoenzyme. Its ATPase activity is stimulated by binding to RNAP.

Functionally, transcription regulator that activates transcription by stimulating RNA polymerase (RNAP) recycling in case of stress conditions such as supercoiled DNA or high salt concentrations. Probably acts by releasing the RNAP, when it is trapped or immobilized on tightly supercoiled DNA. Does not activate transcription on linear DNA. Probably not involved in DNA repair. The chain is RNA polymerase-associated protein RapA from Shewanella amazonensis (strain ATCC BAA-1098 / SB2B).